The chain runs to 150 residues: Ribosomal RNA large subunit methyltransferase H (150 aa).

Residues Ala100 and 118–123 (LSEMTF) contribute to the S-adenosyl-L-methionine site.

Belongs to the RNA methyltransferase RlmH family. Homodimer.

The protein localises to the cytoplasm. It carries out the reaction pseudouridine(1915) in 23S rRNA + S-adenosyl-L-methionine = N(3)-methylpseudouridine(1915) in 23S rRNA + S-adenosyl-L-homocysteine + H(+). In terms of biological role, specifically methylates the pseudouridine at position 1915 (m3Psi1915) in 23S rRNA. This chain is Ribosomal RNA large subunit methyltransferase H, found in Helicobacter pylori (strain ATCC 700392 / 26695) (Campylobacter pylori).